The chain runs to 72 residues: Translational regulator CsrA (72 aa).

The protein belongs to the CsrA/RsmA family. As to quaternary structure, homodimer; the beta-strands of each monomer intercalate to form a hydrophobic core, while the alpha-helices form wings that extend away from the core.

The protein resides in the cytoplasm. In terms of biological role, a translational regulator that binds mRNA to regulate translation initiation and/or mRNA stability. Usually binds in the 5'-UTR at or near the Shine-Dalgarno sequence preventing ribosome-binding, thus repressing translation. Its main target seems to be the major flagellin gene, while its function is anatagonized by FliW. The protein is Translational regulator CsrA of Agathobacter rectalis (strain ATCC 33656 / DSM 3377 / JCM 17463 / KCTC 5835 / VPI 0990) (Eubacterium rectale).